Here is a 354-residue protein sequence, read N- to C-terminus: MELDEESFLDELMSLRRDGSAPWQAPPYPGGGGGGGGGGMMMSDLLFYGGDGGSAEARGGMDASPFQELASMAAPPPQHPHEEFNFDCLSEVCNPYRSCGAQLVPSEAASQTQTQLTPLRDAMVAEEETSGDKALLHGGGGSSSPTFMFGGGAGESSEMMAGIRGVGGGVHPRSKLHGTPSKNLMAERRRRKRLNDRLSMLRSIVPKISKMDRTSILGDTIDYVKELTERIKTLEEEIGVTPEELDLLNTMKDSSSGNNNEMLVRNSTKFDVENRGSGNTRIEICCPANPGVLLSTVSALEVLGLEIEQCVVSCFSDFGMQASCLQEDGKRQVVSTDEIKQTLFRSAGYGGRCL.

Positions 124 to 143 (VAEEETSGDKALLHGGGGSS) are disordered. The tract at residues 178-191 (GTPSKNLMAERRRR) is basic motif. Positions 178–227 (GTPSKNLMAERRRRKRLNDRLSMLRSIVPKISKMDRTSILGDTIDYVKEL) constitute a bHLH domain. The helix-loop-helix motif stretch occupies residues 192–227 (KRLNDRLSMLRSIVPKISKMDRTSILGDTIDYVKEL).

This sequence belongs to the bHLH protein family. Interacts with LAX1. Phosphorylated by MAPK3 and MAPK6.

It is found in the nucleus. The protein resides in the cytoplasm. Transcription factor involved in defense responses that functions downstream of RAC1 and upstream of PAL1 and WRKY19 genes. This chain is Transcription factor BHLH3, found in Oryza sativa subsp. japonica (Rice).